The sequence spans 199 residues: Glycerol-3-phosphate acyltransferase (199 aa).

5 helical membrane-spanning segments follow: residues 4–24 (LVSV…FLMG), 51–71 (WAAL…AYLG), 77–97 (EWGF…PVWL), 111–131 (VMLL…ALAV), and 152–172 (LFLL…AVVI).

The protein belongs to the PlsY family. Probably interacts with PlsX.

Its subcellular location is the cell membrane. The enzyme catalyses an acyl phosphate + sn-glycerol 3-phosphate = a 1-acyl-sn-glycero-3-phosphate + phosphate. It functions in the pathway lipid metabolism; phospholipid metabolism. Functionally, catalyzes the transfer of an acyl group from acyl-phosphate (acyl-PO(4)) to glycerol-3-phosphate (G3P) to form lysophosphatidic acid (LPA). This enzyme utilizes acyl-phosphate as fatty acyl donor, but not acyl-CoA or acyl-ACP. The protein is Glycerol-3-phosphate acyltransferase of Symbiobacterium thermophilum (strain DSM 24528 / JCM 14929 / IAM 14863 / T).